Consider the following 249-residue polypeptide: Syntaxin-10 (249 aa).

Residue S2 is modified to N-acetylserine. Topologically, residues 2–228 (SLEDPFFVVR…VSHMTSDRRQ (227 aa)) are cytoplasmic. Residues 41–69 (EELDWTTNELRNGLRSIEWDLEDLEETIG) adopt a coiled-coil conformation. The residue at position 108 (S108) is a Phosphoserine. Phosphothreonine is present on T110. Phosphoserine is present on residues S134, S140, and S143. The t-SNARE coiled-coil homology domain maps to 157-219 (QLIMDEQDQQ…DGVLRKLAKV (63 aa)). A helical; Anchor for type IV membrane protein membrane pass occupies residues 229-249 (WCAIAVLVGVLLLVLILLFSL).

The protein belongs to the syntaxin family. Interacts with VPS52. In terms of tissue distribution, expressed at high levels in heart, skeletal muscle and pancreas.

It localises to the golgi apparatus membrane. SNARE involved in vesicular transport from the late endosomes to the trans-Golgi network. This chain is Syntaxin-10 (STX10), found in Homo sapiens (Human).